Reading from the N-terminus, the 97-residue chain is uncharacterized protein (97 aa).

One can recognise a Stress-response A/B barrel domain in the interval 2–95 (IRHLVLFKLN…EFATWVIADY (94 aa)).

This is an uncharacterized protein from Streptomyces coelicolor (strain ATCC BAA-471 / A3(2) / M145).